A 142-amino-acid polypeptide reads, in one-letter code: Large ribosomal subunit protein uL13 (142 aa).

This sequence belongs to the universal ribosomal protein uL13 family. In terms of assembly, part of the 50S ribosomal subunit.

This protein is one of the early assembly proteins of the 50S ribosomal subunit, although it is not seen to bind rRNA by itself. It is important during the early stages of 50S assembly. The polypeptide is Large ribosomal subunit protein uL13 (Acidithiobacillus ferrooxidans (strain ATCC 23270 / DSM 14882 / CIP 104768 / NCIMB 8455) (Ferrobacillus ferrooxidans (strain ATCC 23270))).